The sequence spans 629 residues: tRNA uridine 5-carboxymethylaminomethyl modification enzyme MnmG (629 aa).

Residues 13–18, Val-125, and Ser-180 contribute to the FAD site; that span reads GGGHAG. 273–287 provides a ligand contact to NAD(+); the sequence is GPRYCPSIEDKVMRF. Gln-370 contacts FAD.

The protein belongs to the MnmG family. As to quaternary structure, homodimer. Heterotetramer of two MnmE and two MnmG subunits. It depends on FAD as a cofactor.

Its subcellular location is the cytoplasm. Its function is as follows. NAD-binding protein involved in the addition of a carboxymethylaminomethyl (cmnm) group at the wobble position (U34) of certain tRNAs, forming tRNA-cmnm(5)s(2)U34. This Photobacterium profundum (strain SS9) protein is tRNA uridine 5-carboxymethylaminomethyl modification enzyme MnmG.